A 395-amino-acid chain; its full sequence is Calreticulin (395 aa).

The first 15 residues, 1-15, serve as a signal peptide directing secretion; that stretch reads MKSLCLLAIVAVVSA. A disulfide bridge links Cys101 with Cys133. Residues Tyr105, Lys107, Tyr124, and Asp131 each contribute to the an alpha-D-glucoside site. 7 repeat units span residues 186 to 197, 205 to 216, 222 to 233, 239 to 250, 254 to 264, 268 to 278, and 282 to 292. Residues 186-250 are 4 X approximate repeats; sequence AQTGSLEEDW…DAKKPEDWDD (65 aa). The P-domain stretch occupies residues 193-301; sequence EDWDLLPAKK…PEYTPDDELY (109 aa). Residues 202–212 show a composition bias toward basic and acidic residues; the sequence is KIKDPDAKKPE. Residues 202 to 255 form a disordered region; that stretch reads KIKDPDAKKPEDWDEREYIDDAEDAKPEDWEKPEHIPDPDAKKPEDWDDEMDGE. The segment covering 213-224 has biased composition (acidic residues); it reads DWDEREYIDDAE. Basic and acidic residues predominate over residues 225 to 246; the sequence is DAKPEDWEKPEHIPDPDAKKPE. Positions 254 to 292 are 3 X approximate repeats; it reads GEWEPPMIDNPEYKGEWKPKQIKNPAYKGKWIHPEIENP. A C-domain region spans residues 302–395; that stretch reads SYESWGAIGF…KEEEEGHDEL (94 aa). Asp312 contacts an alpha-D-glucoside. Residues 340 to 380 are compositionally biased toward basic and acidic residues; that stretch reads ETFDKLKTVEKEKKEKADEETRKAEEEARKKAEEEKEAKKD. The segment at 340 to 395 is disordered; that stretch reads ETFDKLKTVEKEKKEKADEETRKAEEEARKKAEEEKEAKKDDDEEEKEEEEGHDEL. Positions 381–395 are enriched in acidic residues; sequence DDEEEKEEEEGHDEL. Positions 392–395 match the Prevents secretion from ER motif; that stretch reads HDEL.

It belongs to the calreticulin family. Cleaved by caspase ced-3 in vitro.

It is found in the endoplasmic reticulum lumen. Molecular calcium-binding chaperone promoting folding, oligomeric assembly and quality control in the endoplasmic reticulum (ER) via the calreticulin/calnexin cycle. This lectin may interact transiently with almost all of the monoglucosylated glycoproteins that are synthesized in the ER. Probably by controlling the folding of extracellular matrix protein unc-52/Perlecan, may play a role in the formation of fibrous organelles, a hemidesmosome-like structure attaching muscles to the epidermis. Protects dopaminergic neurons against oxidative stress-induced neurodegeneration. May play a role in protection against ER stress. Plays a role in modulating lifespan, acting by influencing ER calcium homeostasis. In Caenorhabditis elegans, this protein is Calreticulin (crt-1).